We begin with the raw amino-acid sequence, 644 residues long: Interleukin-23 receptor (644 aa).

The signal sequence occupies residues 1-23; sequence MSHLTLQLHVVIALYVLFRWCHG. The Extracellular segment spans residues 24-374; the sequence is GITSINCSGD…PASGNHQDIG (351 aa). N-linked (GlcNAc...) asparagine glycans are attached at residues Asn-47, Asn-130, and Asn-232. Fibronectin type-III domains lie at 127–217 and 219–318; these read APSN…LDDI and IPSA…TSQE. The chain crosses the membrane as a helical span at residues 375 to 395; that stretch reads LLSGMVFLAIMLPIFSLIGIF. Residues 396–644 are Cytoplasmic-facing; sequence NRSLRIGIKR…HFSRISLFQK (249 aa).

This sequence belongs to the type I cytokine receptor family. Type 2 subfamily. Heterodimer with IL12RB1. In presence of IL23, the heterodimer forms the IL23 receptor. Interacts with JAK2 and in presence of IL23 with STAT3. In terms of processing, phosphorylated in response to IL23. In terms of tissue distribution, expressed by Th1, Th2 and dendritic cells.

The protein localises to the cell membrane. Functionally, associates with IL12RB1 to form the interleukin-23 receptor. Binds IL23 and mediates T-cells, NK cells and possibly certain macrophage/myeloid cells stimulation probably through activation of the Jak-Stat signaling cascade. IL23 functions in innate and adaptive immunity and may participate in acute response to infection in peripheral tissues. IL23 may be responsible for autoimmune inflammatory diseases and be important for tumorigenesis. In Mus musculus (Mouse), this protein is Interleukin-23 receptor (Il23r).